Here is a 133-residue protein sequence, read N- to C-terminus: Ycf54-like protein (133 aa).

It belongs to the ycf54 family.

The chain is Ycf54-like protein from Synechocystis sp. (strain ATCC 27184 / PCC 6803 / Kazusa).